Here is a 449-residue protein sequence, read N- to C-terminus: Phosphoglucosamine mutase (449 aa).

Residue Ser100 is the Phosphoserine intermediate of the active site. The Mg(2+) site is built by Ser100, Asp241, Asp243, and Asp245. Ser100 carries the phosphoserine modification.

It belongs to the phosphohexose mutase family. It depends on Mg(2+) as a cofactor. Post-translationally, activated by phosphorylation.

The catalysed reaction is alpha-D-glucosamine 1-phosphate = D-glucosamine 6-phosphate. In terms of biological role, catalyzes the conversion of glucosamine-6-phosphate to glucosamine-1-phosphate. The polypeptide is Phosphoglucosamine mutase (Clostridium botulinum (strain 657 / Type Ba4)).